The chain runs to 196 residues: uncharacterized protein (196 aa).

A helical transmembrane segment spans residues 71 to 87; it reads YVKLIGTGCYVAILISG.

Its subcellular location is the membrane. This is an uncharacterized protein from Dictyostelium discoideum (Social amoeba).